Here is a 414-residue protein sequence, read N- to C-terminus: Gamma-glutamyl phosphate reductase (414 aa).

Belongs to the gamma-glutamyl phosphate reductase family.

The protein resides in the cytoplasm. The enzyme catalyses L-glutamate 5-semialdehyde + phosphate + NADP(+) = L-glutamyl 5-phosphate + NADPH + H(+). It participates in amino-acid biosynthesis; L-proline biosynthesis; L-glutamate 5-semialdehyde from L-glutamate: step 2/2. Its function is as follows. Catalyzes the NADPH-dependent reduction of L-glutamate 5-phosphate into L-glutamate 5-semialdehyde and phosphate. The product spontaneously undergoes cyclization to form 1-pyrroline-5-carboxylate. In Xanthomonas axonopodis pv. citri (strain 306), this protein is Gamma-glutamyl phosphate reductase.